Reading from the N-terminus, the 378-residue chain is Serpin B6 (378 aa).

At Met1 the chain carries N-acetylmethionine. Residue Lys196 is modified to N6-acetyllysine.

This sequence belongs to the serpin family. Ov-serpin subfamily. In terms of assembly, forms a complex with the monomeric form of beta-tryptase. In terms of tissue distribution, brain.

The protein resides in the cytoplasm. Its function is as follows. Inhibitor of cathepsin G, kallikrein-8 and thrombin. May play an important role in the inner ear in the protection against leakage of lysosomal content during stress. May be involved in the regulation of serine proteinases present in the brain or extravasated from the blood. The polypeptide is Serpin B6 (SERPINB6) (Bos taurus (Bovine)).